The sequence spans 102 residues: Small ribosomal subunit protein uS10 (102 aa).

It belongs to the universal ribosomal protein uS10 family. As to quaternary structure, part of the 30S ribosomal subunit.

Functionally, involved in the binding of tRNA to the ribosomes. In Macrococcus caseolyticus (strain JCSC5402) (Macrococcoides caseolyticum), this protein is Small ribosomal subunit protein uS10.